Here is a 176-residue protein sequence, read N- to C-terminus: Peptide deformylase (176 aa).

Residues cysteine 97 and histidine 139 each coordinate Fe cation. Glutamate 140 is a catalytic residue. Position 143 (histidine 143) interacts with Fe cation.

Belongs to the polypeptide deformylase family. The cofactor is Fe(2+).

The enzyme catalyses N-terminal N-formyl-L-methionyl-[peptide] + H2O = N-terminal L-methionyl-[peptide] + formate. In terms of biological role, removes the formyl group from the N-terminal Met of newly synthesized proteins. Requires at least a dipeptide for an efficient rate of reaction. N-terminal L-methionine is a prerequisite for activity but the enzyme has broad specificity at other positions. The polypeptide is Peptide deformylase (Thermomicrobium roseum (strain ATCC 27502 / DSM 5159 / P-2)).